A 292-amino-acid chain; its full sequence is Ribosomal protein L11 methyltransferase (292 aa).

S-adenosyl-L-methionine-binding residues include T136, G159, D181, and N228.

The protein belongs to the methyltransferase superfamily. PrmA family.

It is found in the cytoplasm. It carries out the reaction L-lysyl-[protein] + 3 S-adenosyl-L-methionine = N(6),N(6),N(6)-trimethyl-L-lysyl-[protein] + 3 S-adenosyl-L-homocysteine + 3 H(+). In terms of biological role, methylates ribosomal protein L11. The polypeptide is Ribosomal protein L11 methyltransferase (Rhizobium leguminosarum bv. trifolii (strain WSM2304)).